The following is a 66-amino-acid chain: MAKNKDVRVTITLECTNNCAQNNEKKKLGVSRYTTQKNRRNTPTRLELKKFCSYCNKHTIHKEIKK.

This sequence belongs to the bacterial ribosomal protein bL33 family.

Its subcellular location is the plastid. The protein resides in the chloroplast. In Physcomitrium patens (Spreading-leaved earth moss), this protein is Large ribosomal subunit protein bL33c.